We begin with the raw amino-acid sequence, 221 residues long: Octanoyltransferase (221 aa).

The region spanning 31 to 213 (DKSADEIWLV…HFVTILGYNK (183 aa)) is the BPL/LPL catalytic domain. Residues 70-77 (RGGQITYH), 142-144 (SLG), and 155-157 (GLA) each bind substrate. Cys173 functions as the Acyl-thioester intermediate in the catalytic mechanism.

Belongs to the LipB family.

It localises to the cytoplasm. The catalysed reaction is octanoyl-[ACP] + L-lysyl-[protein] = N(6)-octanoyl-L-lysyl-[protein] + holo-[ACP] + H(+). It participates in protein modification; protein lipoylation via endogenous pathway; protein N(6)-(lipoyl)lysine from octanoyl-[acyl-carrier-protein]: step 1/2. Catalyzes the transfer of endogenously produced octanoic acid from octanoyl-acyl-carrier-protein onto the lipoyl domains of lipoate-dependent enzymes. Lipoyl-ACP can also act as a substrate although octanoyl-ACP is likely to be the physiological substrate. The polypeptide is Octanoyltransferase (Mannheimia succiniciproducens (strain KCTC 0769BP / MBEL55E)).